Consider the following 312-residue polypeptide: MDYDIKFTWDKNQFLDQEIRIPKYTLPWDFKSSPFDKDFENQEMEYVKQFFQNYENAVNYVKKNEIGKIAALNFPLGEKDEYMVNSKLLDFLFILDDYIYESRNYEEDYVDNLMDRSSKSHDPFGREIWRLFDEYYRVGVKESVDLLIRDFEYWSRSAIKTNKYKSLNSSLSIEDYFNSRHGDFGMTITASSCTSTLYVENEIRESKNFKKFFKYFELCNLMINDCGSFKMEINEILLTNFVKVRAIQLGSIDLALKYCVGLLNKYIIKVDKYSTKLEQQYPNHSHLKKYIYTLKTFTAGHNKGYGHANRYN.

The DDxx(x)D/E motif signature appears at 96-101 (DDYIYE). An NDxxSxxxD/E motif motif is present at residues 224–232 (NDCGSFKME).

It belongs to the terpene synthase family.

The catalysed reaction is (2E,6E)-farnesyl diphosphate + H2O = discoidol + diphosphate. It functions in the pathway sesquiterpene biosynthesis. Functionally, terpene synthase; part of the gene cluster that mediates the biosynthesis of the trisnorsesquiterpene discodiene which has a function during later stages of multicellular development, during the transition from fingers to Mexican hats. The terpene synthase tps8 converts its substrate farnesyl diphosphate (FDP) into the bicyclic sesquiterpene alcohol discoidol. The cytochrome P450 monooxygenase cyp521A1 then catalyzes the oxidative degradation of discoidol to form the trisnorsesquiterpene discodiene. This chain is Terpene synthase 8, found in Dictyostelium discoideum (Social amoeba).